Here is a 507-residue protein sequence, read N- to C-terminus: Maturase K (507 aa).

This sequence belongs to the intron maturase 2 family. MatK subfamily.

The protein resides in the plastid. It is found in the chloroplast. Functionally, usually encoded in the trnK tRNA gene intron. Probably assists in splicing its own and other chloroplast group II introns. The sequence is that of Maturase K from Browningia hertlingiana (Cactus).